A 302-amino-acid chain; its full sequence is Aurora/IPL1-related protein kinase 2 (302 aa).

Residues Met1 to Asn17 show a composition bias toward polar residues. Residues Met1–Ser23 form a disordered region. Residues Phe27–Val277 enclose the Protein kinase domain. ATP-binding positions include Leu33–Val41 and Lys56. Residue Asp150 is the Proton acceptor of the active site.

It belongs to the protein kinase superfamily. Ser/Thr protein kinase family. Interacts with zen-4 and icp-1. Part of a complex containing at least air-2; icp-1; csc-1 and bir-1. Interacts with tlk-1 and bmk-1.

It is found in the cytoplasm. It localises to the cytoskeleton. The protein resides in the chromosome. Its subcellular location is the midbody. The enzyme catalyses L-seryl-[protein] + ATP = O-phospho-L-seryl-[protein] + ADP + H(+). The catalysed reaction is L-threonyl-[protein] + ATP = O-phospho-L-threonyl-[protein] + ADP + H(+). Functionally, serine/threonine-protein kinase which mediates both meiotic and mitotic chromosome segregation. Required for histone H3 'Ser-10' phosphorylation. Phosphorylates tlk-1 and zen-4. In Caenorhabditis briggsae, this protein is Aurora/IPL1-related protein kinase 2 (air-2).